Here is a 478-residue protein sequence, read N- to C-terminus: tRNA(Ile)-lysidine synthase (478 aa).

Position 27–32 (27–32 (SGGSDS)) interacts with ATP.

The protein belongs to the tRNA(Ile)-lysidine synthase family.

The protein resides in the cytoplasm. It catalyses the reaction cytidine(34) in tRNA(Ile2) + L-lysine + ATP = lysidine(34) in tRNA(Ile2) + AMP + diphosphate + H(+). Ligates lysine onto the cytidine present at position 34 of the AUA codon-specific tRNA(Ile) that contains the anticodon CAU, in an ATP-dependent manner. Cytidine is converted to lysidine, thus changing the amino acid specificity of the tRNA from methionine to isoleucine. The chain is tRNA(Ile)-lysidine synthase from Rickettsia conorii (strain ATCC VR-613 / Malish 7).